We begin with the raw amino-acid sequence, 621 residues long: Chaperone protein DnaK (621 aa).

A Phosphothreonine; by autocatalysis modification is found at threonine 202. Residues 596–621 (SQFAQAAKQNEEKKEEDKKDSEESKN) are disordered. A compositionally biased stretch (basic and acidic residues) spans 604 to 621 (QNEEKKEEDKKDSEESKN).

This sequence belongs to the heat shock protein 70 family.

Acts as a chaperone. This chain is Chaperone protein DnaK, found in Malacoplasma penetrans (strain HF-2) (Mycoplasma penetrans).